We begin with the raw amino-acid sequence, 397 residues long: P2X purinoceptor 3 (397 aa).

Topologically, residues 1-20 (MNCISDFFTYETTKSVVVKS) are cytoplasmic. The helical transmembrane segment at 21-43 (WTIGIINRAVQLLIISYFVGWVF) threads the bilayer. Residues 44-322 (LHEKAYQVRD…AGKFNIIPTI (279 aa)) lie on the Extracellular side of the membrane. ATP-binding residues include lysine 63 and lysine 65. Cystine bridges form between cysteine 107–cysteine 153, cysteine 116–cysteine 137, and cysteine 122–cysteine 147. Residue glutamate 111 coordinates Mg(2+). N-linked (GlcNAc...) asparagine glycosylation is present at asparagine 139. Aspartate 158 is a Mg(2+) binding site. Aspartate 158 provides a ligand contact to Ca(2+). N-linked (GlcNAc...) asparagine glycosylation occurs at asparagine 170. Position 172 (threonine 172) interacts with ATP. Residue asparagine 194 is glycosylated (N-linked (GlcNAc...) asparagine). 2 disulfide bridges follow: cysteine 203-cysteine 213 and cysteine 247-cysteine 256. 3 residues coordinate ATP: serine 275, asparagine 279, and arginine 281. Residue asparagine 290 is glycosylated (N-linked (GlcNAc...) asparagine). Lysine 299 is a binding site for ATP. A helical transmembrane segment spans residues 323 to 341 (ISSVAAFTSVGVGTVLCDI). Residues 342-397 (ILLNFLKGADHYKARKFEEVTETTLKGTASTNPVFTSDQATVEKQSTDSGAYSIGH) lie on the Cytoplasmic side of the membrane.

The protein belongs to the P2X receptor family. Homotrimer. Forms heterotrimer with P2RX2. Heterotrimeric P2RX2/3 has a ligand dose-response profile that is distinct from either homotrimeric P2RX2 or P2RX3.

Its subcellular location is the cell membrane. The enzyme catalyses Ca(2+)(in) = Ca(2+)(out). The catalysed reaction is Na(+)(in) = Na(+)(out). Has high sensitivity to ATP. Fast activation by external ATP. Exhibits rapid desensitization. Sensitives to the ATP agonist:alpha/beta-methylene-ATP. Subject to allosteric inhibition by AF-219. Mg(2+) and Ca(2+) slow deactivation of P2RX3. In terms of biological role, extracellular ATP-activated non-selective cation channel. Plays particularly important role in sensory neurons where its activation is critical for gustatory, nociceptive responses, visceral reflexes and sensory hypersensitization. This Mus musculus (Mouse) protein is P2X purinoceptor 3 (P2rx3).